We begin with the raw amino-acid sequence, 272 residues long: 4-diphosphocytidyl-2-C-methyl-D-erythritol kinase (272 aa).

K14 is a catalytic residue. ATP is bound at residue 92–102 (PMGGGLGGGSS). D132 is a catalytic residue.

It belongs to the GHMP kinase family. IspE subfamily.

The enzyme catalyses 4-CDP-2-C-methyl-D-erythritol + ATP = 4-CDP-2-C-methyl-D-erythritol 2-phosphate + ADP + H(+). Its pathway is isoprenoid biosynthesis; isopentenyl diphosphate biosynthesis via DXP pathway; isopentenyl diphosphate from 1-deoxy-D-xylulose 5-phosphate: step 3/6. Functionally, catalyzes the phosphorylation of the position 2 hydroxy group of 4-diphosphocytidyl-2C-methyl-D-erythritol. The chain is 4-diphosphocytidyl-2-C-methyl-D-erythritol kinase from Fervidobacterium nodosum (strain ATCC 35602 / DSM 5306 / Rt17-B1).